Reading from the N-terminus, the 115-residue chain is Large ribosomal subunit protein uL24 (115 aa).

The protein belongs to the universal ribosomal protein uL24 family. Part of the 50S ribosomal subunit.

Its function is as follows. One of two assembly initiator proteins, it binds directly to the 5'-end of the 23S rRNA, where it nucleates assembly of the 50S subunit. Functionally, one of the proteins that surrounds the polypeptide exit tunnel on the outside of the subunit. The protein is Large ribosomal subunit protein uL24 of Synechocystis sp. (strain ATCC 27184 / PCC 6803 / Kazusa).